We begin with the raw amino-acid sequence, 548 residues long: Mercuric reductase (548 aa).

An HMA domain is found at 1–65 (MTEITVNGMT…AIAALGYQGS (65 aa)). A metal cation contacts are provided by Cys11 and Cys14. Residues Ala97, Gly117, and Thr122 each contribute to the FAD site. A disulfide bond links Cys123 and Cys128. Lys132, Ala198, Asp390, and Val398 together coordinate FAD. Hg(2+) contacts are provided by Cys545 and Cys546.

This sequence belongs to the class-I pyridine nucleotide-disulfide oxidoreductase family. Homodimer. It depends on FAD as a cofactor.

It carries out the reaction Hg + NADP(+) + H(+) = Hg(2+) + NADPH. Functionally, resistance to Hg(2+) in bacteria appears to be governed by a specialized system which includes mercuric reductase. MerA protein is responsible for volatilizing mercury as Hg(0). This Pseudomonas fluorescens protein is Mercuric reductase (merA).